A 365-amino-acid chain; its full sequence is tRNA-specific 2-thiouridylase MnmA (365 aa).

Residues 14–21 and leucine 40 contribute to the ATP site; that span reads AMSGGVDS. The active-site Nucleophile is cysteine 108. An intrachain disulfide couples cysteine 108 to cysteine 204. Glycine 132 is a binding site for ATP. The tract at residues 154–156 is interaction with tRNA; it reads KDQ. Cysteine 204 (cysteine persulfide intermediate) is an active-site residue.

The protein belongs to the MnmA/TRMU family.

The protein localises to the cytoplasm. It catalyses the reaction S-sulfanyl-L-cysteinyl-[protein] + uridine(34) in tRNA + AH2 + ATP = 2-thiouridine(34) in tRNA + L-cysteinyl-[protein] + A + AMP + diphosphate + H(+). In terms of biological role, catalyzes the 2-thiolation of uridine at the wobble position (U34) of tRNA, leading to the formation of s(2)U34. This chain is tRNA-specific 2-thiouridylase MnmA, found in Rickettsia felis (strain ATCC VR-1525 / URRWXCal2) (Rickettsia azadi).